Here is a 155-residue protein sequence, read N- to C-terminus: UPF0178 protein ACIAD2644 (155 aa).

The segment at Gly120–Ala155 is disordered.

The protein belongs to the UPF0178 family.

This is UPF0178 protein ACIAD2644 from Acinetobacter baylyi (strain ATCC 33305 / BD413 / ADP1).